Reading from the N-terminus, the 52-residue chain is MAVPKKRTSISKKRIRKKNWKRKGYWTSLKAFSLGKSLSTGNSKSFFVQQNK.

The protein belongs to the bacterial ribosomal protein bL32 family.

The protein localises to the plastid. It is found in the chloroplast. This is Large ribosomal subunit protein bL32c from Arabis hirsuta (Hairy rock-cress).